The sequence spans 391 residues: Rhizopuspepsin-2 (391 aa).

A signal peptide spans 1–21; sequence MKLTLISSCVALAFMALATEA. The propeptide at 22 to 68 is activation peptide; sequence APSGKKLSIPLTKNTNYKPSAKNAIQKALAKYHRFRTTSSSNSTSTE. Residues 84–388 form the Peptidase A1 domain; it reads YYGKVTVGTP…NQEVPEVQIA (305 aa). Residue aspartate 102 is part of the active site. Cysteines 115 and 118 form a disulfide. Aspartate 285 is a catalytic residue. Residues cysteine 319 and cysteine 352 are joined by a disulfide bond.

This sequence belongs to the peptidase A1 family.

It catalyses the reaction Hydrolysis of proteins with broad specificity similar to that of pepsin A, preferring hydrophobic residues at P1 and P1'. Clots milk and activates trypsinogen. Does not cleave 4-Gln-|-His-5, but does cleave 10-His-|-Leu-11 and 12-Val-|-Glu-13 in B chain of insulin.. This is Rhizopuspepsin-2 from Rhizopus niveus.